We begin with the raw amino-acid sequence, 401 residues long: Putative hetero-Diels-Alderase asR5 (401 aa).

Positions 1-21 are cleaved as a signal peptide; sequence MRRSFLISAALGLSMSTPALA. N-linked (GlcNAc...) asparagine glycans are attached at residues N71, N77, N240, and N334.

It belongs to the eupF Diels-Alderase family.

It functions in the pathway secondary metabolite biosynthesis; terpenoid biosynthesis. Its function is as follows. Putative hetero-Diels-Alderase; part of the gene cluster that mediates the biosynthesis of xenovulene A, an unusual meroterpenoid that has potent inhibitory effects on the human gamma-aminobutyrate A (GABAA) benzodiazepine receptor. The first step of xenovulene A biosynthesis is the biosynthesis of 3-methylorcinaldehyde performed by the non-reducing polyketide synthase aspks1. The salicylate hydroxylase asL1 then catalyzes the oxidative dearomatization of 3-methylorcinaldehyde to yield a dearomatized hydroxycyclohexadione. The 2-oxoglutarate-dependent dioxygenase asL3 further catalyzes the oxidative ring expansion to provide the first tropolone metabolite. The cytochrome P450 monooxygenase asR2 allows the synthesis of tropolone hemiacetal. In parallel, a previously unrecognised class of terpene cyclase, asR6, produces alpha-humulene from farnesylpyrophosphate (FPP). The putative Diels-Alderase asR5 probably catalyzes the formation of the tropolone-humulene skeleton by linking humulene and the polyketide moiety. Oxidative-ring contractions catalyzed by asL4 and asL6 then processively remove carbon atoms from the polyketide to yield xenovulene A. This Sarocladium schorii (Acremonium strictum (strain IMI 501407)) protein is Putative hetero-Diels-Alderase asR5.